The chain runs to 188 residues: Elongation factor P (188 aa).

K34 carries the N6-(3,6-diaminohexanoyl)-5-hydroxylysine modification.

It belongs to the elongation factor P family. May be beta-lysylated on the epsilon-amino group of Lys-34 by the combined action of EpmA and EpmB, and then hydroxylated on the C5 position of the same residue by EpmC (if this protein is present). Lysylation is critical for the stimulatory effect of EF-P on peptide-bond formation. The lysylation moiety may extend toward the peptidyltransferase center and stabilize the terminal 3-CCA end of the tRNA. Hydroxylation of the C5 position on Lys-34 may allow additional potential stabilizing hydrogen-bond interactions with the P-tRNA.

It localises to the cytoplasm. The protein operates within protein biosynthesis; polypeptide chain elongation. In terms of biological role, involved in peptide bond synthesis. Alleviates ribosome stalling that occurs when 3 or more consecutive Pro residues or the sequence PPG is present in a protein, possibly by augmenting the peptidyl transferase activity of the ribosome. Modification of Lys-34 is required for alleviation. This chain is Elongation factor P, found in Cronobacter sakazakii (strain ATCC BAA-894) (Enterobacter sakazakii).